A 295-amino-acid chain; its full sequence is Nucleotide-binding protein YvcJ (295 aa).

16 to 23 contacts ATP; that stretch reads GMSGAGKT. 67-70 serves as a coordination point for GTP; sequence DLRG.

Belongs to the RapZ-like family.

Displays ATPase and GTPase activities. Can also hydrolyze pNPP. May affect the expression of competence via the phosphorylation of a cellular component. In Bacillus subtilis (strain 168), this protein is Nucleotide-binding protein YvcJ (yvcJ).